We begin with the raw amino-acid sequence, 2493 residues long: Adenylate cyclase (2493 aa).

Polar residues-rich tracts occupy residues 1–18 (MLFT…SPEQ), 42–51 (RDSNGSSNFT), 60–78 (SQQY…QPDI), 129–147 (PANS…SISP), and 197–210 (APFS…TSVN). 9 disordered regions span residues 1-85 (MLFT…SSTL), 99-148 (FEHA…ISPS), 197-325 (APFS…SSLS), 355-444 (NSPS…QSQS), 475-565 (GSIT…VNML), 616-660 (QAPV…KTSY), 753-832 (NVGE…GSKS), 854-882 (ALVQ…GAGA), and 904-967 (RPSK…ATGT). Over residues 211-233 (PSAASTASPSTSAATRTRPRGGT) the composition is skewed to low complexity. Polar residues-rich tracts occupy residues 234–246 (NASQ…TSFG) and 253–264 (LSSSRSQYSLRP). 2 stretches are compositionally biased toward basic residues: residues 287-303 (AVKK…KKSS) and 404-422 (HLKK…HLAK). The segment covering 425–434 (KPGEDADSAR) has biased composition (basic and acidic residues). The span at 500–525 (PSPSQTPIAERQTSVTSTVESPSHAS) shows a compositional bias: polar residues. Positions 534–555 (SLRTPSRTTASTSTSSASTVLS) are enriched in low complexity. The segment covering 630-640 (TDSELSDRKDS) has biased composition (basic and acidic residues). A compositionally biased stretch (polar residues) spans 641–660 (VVSTHSMRSNHSGISPKTSY). Over residues 754–763 (VGEEEDDDDD) the composition is skewed to acidic residues. Composition is skewed to low complexity over residues 780-791 (SSSGISSTHASS) and 854-870 (ALVQ…QPSP). Polar residues predominate over residues 913–935 (RPNTAGSVGATRPSTTTLGSTLS). The 103-residue stretch at 970–1072 (RNHFIRVYKT…LRFVFRPDSV (103 aa)) folds into the Ras-associating domain. LRR repeat units follow at residues 1086 to 1107 (TFQH…LYKH), 1110 to 1132 (WIVS…VQLC), 1134 to 1155 (SLRT…VRHS), 1157 to 1178 (TLTH…SLDL), 1181 to 1202 (ELMS…FSSI), 1204 to 1225 (TLRN…ICDV), 1227 to 1248 (SLVD…IANL), 1250 to 1271 (NLER…MSEL), 1273 to 1294 (SLRT…LGLP), 1295 to 1316 (RLQN…LGPQ), 1317 to 1336 (LTQV…AALT), 1339 to 1360 (DLTS…LFPQ), 1363 to 1385 (ALVK…GDLK), 1386 to 1407 (RLEM…IGDL), 1409 to 1430 (ALKE…LWLC), 1432 to 1453 (SLAH…PDIR), 1511 to 1534 (SLQK…SELT), 1535 to 1556 (SLEV…SLQT), 1559 to 1580 (KLRE…DLVV), 1583 to 1605 (ELRI…GKLK), 1606 to 1628 (KLAN…HYDW), and 1635 to 1654 (ELRY…TKLS). A PPM-type phosphatase domain is found at 1710-2000 (AYGIADALGK…ESIMVMVISV (291 aa)). One can recognise a Guanylate cyclase domain in the interval 2058–2194 (ALVFTDIKNS…PMVNRAARIS (137 aa)). Mg(2+)-binding residues include Asp2063 and Asp2105. 3 disordered regions span residues 2220 to 2241 (DESS…TEEE), 2354 to 2378 (EADR…HGTA), and 2467 to 2493 (PPRA…ELVP). The segment covering 2470–2485 (ASTSALSLPSPRTSPR) has biased composition (polar residues).

It belongs to the adenylyl cyclase class-3 family. The cofactor is Mg(2+).

It carries out the reaction ATP = 3',5'-cyclic AMP + diphosphate. Its function is as follows. Plays essential roles in regulation of cellular metabolism by catalyzing the synthesis of a second messenger, cAMP. The sequence is that of Adenylate cyclase (UAC1) from Mycosarcoma maydis (Corn smut fungus).